Reading from the N-terminus, the 127-residue chain is Large ribosomal subunit protein bL17 (127 aa).

The protein belongs to the bacterial ribosomal protein bL17 family. In terms of assembly, part of the 50S ribosomal subunit. Contacts protein L32.

This chain is Large ribosomal subunit protein bL17, found in Leuconostoc citreum (strain KM20).